The sequence spans 617 residues: Thioredoxin reductase (617 aa).

FAD-binding positions include 127 to 128, 147 to 150, 163 to 164, 168 to 172, alanine 237, aspartate 433, and 440 to 442; these read PG, DYVK, TC, GCVPK, and ELA. Cysteine 164 and cysteine 169 are disulfide-bonded. The loop important for the interaction with TRX1 stretch occupies residues 514–528; the sequence is HRQKHIRAQKDEYDL. Histidine 585 is an FAD binding site. Catalysis depends on histidine 585, which acts as the Proton acceptor. A disulfide bridge connects residues cysteine 611 and cysteine 616.

The protein belongs to the class-I pyridine nucleotide-disulfide oxidoreductase family. As to quaternary structure, homodimer. Requires FAD as cofactor.

The protein resides in the mitochondrion. It is found in the cytoplasm. The catalysed reaction is [thioredoxin]-dithiol + NADP(+) = [thioredoxin]-disulfide + NADPH + H(+). In terms of biological role, catalyzes the transfer of electrons from NADPH to thioredoxins TRX1, TRX2 and TRX3, which in turn act as reductants of disulfide containing proteins. Able to reduce nitroglutathione (GSNO), a compound involved in the transport of nitric oxide (NO); however, TRX1 is more efficient in reducing GSNO. Has no catalytic activity towards oxidized glutathione (GSSG). This Plasmodium falciparum (isolate 3D7) protein is Thioredoxin reductase.